Here is a 233-residue protein sequence, read N- to C-terminus: Urease accessory protein UreF (233 aa).

Belongs to the UreF family. In terms of assembly, ureD, UreF and UreG form a complex that acts as a GTP-hydrolysis-dependent molecular chaperone, activating the urease apoprotein by helping to assemble the nickel containing metallocenter of UreC. The UreE protein probably delivers the nickel.

Its subcellular location is the cytoplasm. Functionally, required for maturation of urease via the functional incorporation of the urease nickel metallocenter. The sequence is that of Urease accessory protein UreF from Polaromonas sp. (strain JS666 / ATCC BAA-500).